The primary structure comprises 471 residues: Plasmepsin VII (471 aa).

The first 24 residues, 1–24 (MKSVYHHFAIIFFLKLFLCNCILS), serve as a signal peptide directing secretion. In terms of domain architecture, Peptidase A1 spans 96-438 (YYGKIAIGEN…DKDNLQIGFV (343 aa)). Residues Asp-115 and Asp-325 contribute to the active site.

It belongs to the peptidase A1 family.

Its subcellular location is the cytoplasm. In Plasmodium berghei (strain Anka), this protein is Plasmepsin VII.